A 1541-amino-acid chain; its full sequence is WD repeat-containing protein 62 (1541 aa).

Alanine 2 is subject to N-acetylalanine. A Phosphoserine modification is found at serine 33. Threonine 46 bears the Phosphothreonine mark. 12 WD repeats span residues 109–150 (TARK…QVAE), 153–194 (GHKY…VVAS), 196–234 (KVSCRVIALSFSEDSSYFVTVGNRHVRFWFLEVSTEAKV), 291–330 (INLKVSLSSCLCVSQELIFCGCTDGIVRIFQAHSLHYLAN), 357–396 (AVYPDTVALTFDPNHQWLSCVYKDHSIYIWDVKDINKVGK), 402–450 (FHSS…DSHW), 490–529 (DMKAGVRVMQVSPDGQHLASGDRSGNLRIHELHFMDELVR), 532–574 (AHDA…SLEQ), 578–618 (DHSS…DGLH), 626–665 (AEKTTLYDMDIDITQKYVAVACQDRNVRVYNTVNGKQKKC), 671–713 (GDEG…KMFG), and 714–752 (HSEIITGMKFTYDCRHLITVSGDSCVFIWHLGPEITNCM). Serine 501 is modified (phosphoserine). Disordered stretches follow at residues 762–820 (REQP…KESL) and 911–1050 (LSQS…LPQT). Residues 770-780 (KDGKWSRDPRQ) show a composition bias toward basic and acidic residues. A compositionally biased stretch (polar residues) spans 781–795 (ETCTSMPSEISLSPG). The span at 797 to 809 (QTEDELEEECEPE) shows a compositional bias: acidic residues. The WD 13 repeat unit spans residues 803–846 (EEECEPEELLKTPSKESLDSDPRCLLTNGKLPLWAKRLLGDDDV). A compositionally biased stretch (basic and acidic residues) spans 810-820 (ELLKTPSKESL). Positions 937–948 (VSELLCSLESEV) are enriched in low complexity. Serine 943 is modified (phosphoserine). Residues 1008–1026 (PPRPDPDPPFDVAVPPAPG) are compositionally biased toward pro residues. At threonine 1050 the chain carries Phosphothreonine. Phosphoserine is present on residues serine 1095, serine 1125, and serine 1151. 2 disordered regions span residues 1133-1153 (LAGSQPRAEPLRAGTGYTSPG) and 1185-1212 (SSSSVPPTDKTPPTPTALPTPGLAQGVH). The WD 14 repeat unit spans residues 1138 to 1180 (PRAEPLRAGTGYTSPGRTNVLSAGKAEEPLEAWSPLTSCLTGL). A compositionally biased stretch (pro residues) spans 1193 to 1202 (DKTPPTPTAL). Serine 1235, serine 1255, and serine 1256 each carry phosphoserine. Residues 1273 to 1293 (TVTPSSDSEGQEPALPSRGNH) form a disordered region. Threonine 1275 is modified (phosphothreonine).

Can form homodimers (via C-terminus). Interacts (via C-terminus) with MAPKBP1 (via C-terminus). Interacts with CDK5RAP2, CEP152, CEP63 and KIAA0753. CEP63, CDK5RAP2, CEP152, WDR62 are proposed to form a stepwise assembled complex at the centrosome forming a ring near parental centrioles.

Its subcellular location is the nucleus. It is found in the cytoplasm. It localises to the cytoskeleton. The protein resides in the spindle pole. The protein localises to the microtubule organizing center. Its subcellular location is the centrosome. It is found in the centriole. Functionally, required for cerebral cortical development. Plays a role in neuronal proliferation and migration. Plays a role in mother-centriole-dependent centriole duplication; the function seems also to involve CEP152, CDK5RAP2 and CEP63 through a stepwise assembled complex at the centrosome that recruits CDK2 required for centriole duplication. This Sus scrofa (Pig) protein is WD repeat-containing protein 62 (WDR62).